Consider the following 161-residue polypeptide: Peroxynitrite isomerase (161 aa).

The GXWXGXG signature appears at 17-23 (GSWVGRG). His152 serves as a coordination point for heme b.

The protein belongs to the nitrobindin family. Homodimer. It depends on heme b as a cofactor.

It catalyses the reaction peroxynitrite = nitrate. It participates in nitrogen metabolism. Its function is as follows. Heme-binding protein able to scavenge peroxynitrite and to protect free L-tyrosine against peroxynitrite-mediated nitration, by acting as a peroxynitrite isomerase that converts peroxynitrite to nitrate. Therefore, this protein likely plays a role in peroxynitrite sensing and in the detoxification of reactive nitrogen and oxygen species (RNS and ROS, respectively). Is able to bind nitric oxide (NO) in vitro, but may act as a sensor of peroxynitrite levels in vivo. In Mycobacterium leprae (strain TN), this protein is Peroxynitrite isomerase.